A 117-amino-acid polypeptide reads, in one-letter code: Mediator of RNA polymerase II transcription subunit 11 (117 aa).

N-acetylalanine is present on Ala2.

This sequence belongs to the Mediator complex subunit 11 family. In terms of assembly, component of the Mediator complex, which is composed of MED1, MED4, MED6, MED7, MED8, MED9, MED10, MED11, MED12, MED13, MED13L, MED14, MED15, MED16, MED17, MED18, MED19, MED20, MED21, MED22, MED23, MED24, MED25, MED26, MED27, MED29, MED30, MED31, CCNC, CDK8 and CDC2L6/CDK11. The MED12, MED13, CCNC and CDK8 subunits form a distinct module termed the CDK8 module. Mediator containing the CDK8 module is less active than Mediator lacking this module in supporting transcriptional activation. Individual preparations of the Mediator complex lacking one or more distinct subunits have been variously termed ARC, CRSP, DRIP, PC2, SMCC and TRAP.

It is found in the nucleus. Its function is as follows. Component of the Mediator complex, a coactivator involved in the regulated transcription of nearly all RNA polymerase II-dependent genes. Mediator functions as a bridge to convey information from gene-specific regulatory proteins to the basal RNA polymerase II transcription machinery. Mediator is recruited to promoters by direct interactions with regulatory proteins and serves as a scaffold for the assembly of a functional pre-initiation complex with RNA polymerase II and the general transcription factors. The protein is Mediator of RNA polymerase II transcription subunit 11 (MED11) of Bos taurus (Bovine).